Reading from the N-terminus, the 224-residue chain is Flagellar L-ring protein (224 aa).

Residues 1 to 15 form the signal peptide; sequence MARYLVLAVALLLAA. The N-palmitoyl cysteine moiety is linked to residue Cys-16. A lipid anchor (S-diacylglycerol cysteine) is attached at Cys-16.

This sequence belongs to the FlgH family. In terms of assembly, the basal body constitutes a major portion of the flagellar organelle and consists of four rings (L,P,S, and M) mounted on a central rod.

The protein resides in the cell outer membrane. The protein localises to the bacterial flagellum basal body. Its function is as follows. Assembles around the rod to form the L-ring and probably protects the motor/basal body from shearing forces during rotation. This chain is Flagellar L-ring protein, found in Shewanella baltica (strain OS185).